The chain runs to 73 residues: MNTRWQQAGQKVKPGFKLAGKLVLLTALRYGPAGVAGWAIKSVARRPLKMLLAVALEPLLSRAANKLAQRYKR.

This sequence belongs to the PspD family.

It localises to the cytoplasm. The protein resides in the cell inner membrane. Its function is as follows. The phage shock protein (psp) operon (pspABCDE) may play a significant role in the competition for survival under nutrient- or energy-limited conditions. The polypeptide is Phage shock protein D (pspD) (Escherichia coli O157:H7).